The primary structure comprises 178 residues: MAELLTLARPYAKAAFAYASEQGATDNWSTALQVLSAAVQDEAFSAYLNRPELTPSEQVELFAKILGEDQSQAVSNFLTLLADNDRLILLPEIAEEYEELKSQNNNVVDVVIESAFPLSAEQEQLLKTALEKRYNSSVTISVEVKPALIAGVVIRAGDQVIDDSALNKLEKMRTRLLA.

Belongs to the ATPase delta chain family. As to quaternary structure, F-type ATPases have 2 components, F(1) - the catalytic core - and F(0) - the membrane proton channel. F(1) has five subunits: alpha(3), beta(3), gamma(1), delta(1), epsilon(1). F(0) has three main subunits: a(1), b(2) and c(10-14). The alpha and beta chains form an alternating ring which encloses part of the gamma chain. F(1) is attached to F(0) by a central stalk formed by the gamma and epsilon chains, while a peripheral stalk is formed by the delta and b chains.

Its subcellular location is the cell inner membrane. F(1)F(0) ATP synthase produces ATP from ADP in the presence of a proton or sodium gradient. F-type ATPases consist of two structural domains, F(1) containing the extramembraneous catalytic core and F(0) containing the membrane proton channel, linked together by a central stalk and a peripheral stalk. During catalysis, ATP synthesis in the catalytic domain of F(1) is coupled via a rotary mechanism of the central stalk subunits to proton translocation. In terms of biological role, this protein is part of the stalk that links CF(0) to CF(1). It either transmits conformational changes from CF(0) to CF(1) or is implicated in proton conduction. The protein is ATP synthase subunit delta of Acinetobacter baylyi (strain ATCC 33305 / BD413 / ADP1).